The primary structure comprises 288 residues: Bifunctional protein FolD (288 aa).

NADP(+) is bound by residues 166–168, S191, and I232; that span reads GRS.

The protein belongs to the tetrahydrofolate dehydrogenase/cyclohydrolase family. Homodimer.

It catalyses the reaction (6R)-5,10-methylene-5,6,7,8-tetrahydrofolate + NADP(+) = (6R)-5,10-methenyltetrahydrofolate + NADPH. It carries out the reaction (6R)-5,10-methenyltetrahydrofolate + H2O = (6R)-10-formyltetrahydrofolate + H(+). Its pathway is one-carbon metabolism; tetrahydrofolate interconversion. In terms of biological role, catalyzes the oxidation of 5,10-methylenetetrahydrofolate to 5,10-methenyltetrahydrofolate and then the hydrolysis of 5,10-methenyltetrahydrofolate to 10-formyltetrahydrofolate. The polypeptide is Bifunctional protein FolD (Rickettsia massiliae (strain Mtu5)).